Here is a 463-residue protein sequence, read N- to C-terminus: L-seryl-tRNA(Sec) selenium transferase (463 aa).

K295 is subject to N6-(pyridoxal phosphate)lysine.

It belongs to the SelA family. In terms of assembly, homodecamer; pentamer of dimers. Binds only one seryl-tRNA(Sec) per dimer. It depends on pyridoxal 5'-phosphate as a cofactor.

Its subcellular location is the cytoplasm. The catalysed reaction is L-seryl-tRNA(Sec) + selenophosphate + H(+) = L-selenocysteinyl-tRNA(Sec) + phosphate. Its pathway is aminoacyl-tRNA biosynthesis; selenocysteinyl-tRNA(Sec) biosynthesis; selenocysteinyl-tRNA(Sec) from L-seryl-tRNA(Sec) (bacterial route): step 1/1. Converts seryl-tRNA(Sec) to selenocysteinyl-tRNA(Sec) required for selenoprotein biosynthesis. This chain is L-seryl-tRNA(Sec) selenium transferase, found in Salmonella typhimurium (strain LT2 / SGSC1412 / ATCC 700720).